The primary structure comprises 111 residues: Universal stress protein B (111 aa).

2 helical membrane passes run 1 to 21 (MISTVALFWALCVVCVVNMAR) and 90 to 110 (FILTSALCGLVVVSLVALMLW).

Belongs to the universal stress protein B family.

Its subcellular location is the cell inner membrane. The polypeptide is Universal stress protein B (Yersinia pseudotuberculosis serotype O:1b (strain IP 31758)).